The primary structure comprises 120 residues: Flagellar protein FliT (120 aa).

The segment at 1–50 is required for homodimerization; sequence MNDFISSLNNWQALYALSNTMLSLANSGQWDELIEQEVKYVTLVEAIARN. The interval 59–97 is fliD binding; it reads FQEKARELLTKVLANEAALKIKLQARMEELRVLIEQNGN.

The protein belongs to the FliT family. As to quaternary structure, homodimer. Interacts with FliD and FlhC.

It localises to the cytoplasm. The protein resides in the cytosol. Its function is as follows. Dual-function protein that regulates the transcription of class 2 flagellar operons and that also acts as an export chaperone for the filament-capping protein FliD. As a transcriptional regulator, acts as an anti-FlhDC factor; it directly binds FlhC, thus inhibiting the binding of the FlhC/FlhD complex to class 2 promoters, resulting in decreased expression of class 2 flagellar operons. As a chaperone, effects FliD transition to the membrane by preventing its premature polymerization, and by directing it to the export apparatus. This is Flagellar protein FliT from Cronobacter sakazakii (strain ATCC BAA-894) (Enterobacter sakazakii).